Consider the following 474-residue polypeptide: MTKKLHIKTWGCQMNEYDSSKMADLLDATHGYQLTDVAEEADVLLLNTCSIREKAQEKVFHQLGRWKLLKEKNPDLIIGVGGCVASQEGEHIRQRAHYVDIIFGPQTLHRLPEMINSVRGDRSPVVDISFPEIEKFDRLPEPRAEGPTAFVSIMEGCNKYCTYCVVPYTRGEEVSRPSDDILFEIAQLAAQGVREVNLLGQNVNAWRGENYDGTTGSFADLLRLVAAIDGIDRIRFTTSHPIEFTDDIIEVYRDTPELVSFLHLPVQSGSDRILNLMGRTHTALEYKAIIRKLRAARPDIQISSDFIVGFPGETTEDFEKTMKLIADVNFDMSYSFIFSARPGTPAADMVDDVPEEEKKQRLYILQERINQQAMAWSRRMLGTTQRILVEGTSRKSIMELSGRTENNRVVNFEGTPDMIGKFVDVEITDVYPNSLRGKVVRTEDEMGLRMAETPESVIARTRKENDLGVGYYQP.

The region spanning 3-120 (KKLHIKTWGC…LPEMINSVRG (118 aa)) is the MTTase N-terminal domain. [4Fe-4S] cluster is bound by residues C12, C49, C83, C157, C161, and C164. The Radical SAM core domain maps to 143 to 375 (RAEGPTAFVS…QERINQQAMA (233 aa)). Positions 378 to 441 (RRMLGTTQRI…PNSLRGKVVR (64 aa)) constitute a TRAM domain.

Belongs to the methylthiotransferase family. MiaB subfamily. As to quaternary structure, monomer. It depends on [4Fe-4S] cluster as a cofactor.

The protein resides in the cytoplasm. The enzyme catalyses N(6)-dimethylallyladenosine(37) in tRNA + (sulfur carrier)-SH + AH2 + 2 S-adenosyl-L-methionine = 2-methylsulfanyl-N(6)-dimethylallyladenosine(37) in tRNA + (sulfur carrier)-H + 5'-deoxyadenosine + L-methionine + A + S-adenosyl-L-homocysteine + 2 H(+). In terms of biological role, catalyzes the methylthiolation of N6-(dimethylallyl)adenosine (i(6)A), leading to the formation of 2-methylthio-N6-(dimethylallyl)adenosine (ms(2)i(6)A) at position 37 in tRNAs that read codons beginning with uridine. The protein is tRNA-2-methylthio-N(6)-dimethylallyladenosine synthase of Escherichia coli (strain SE11).